The chain runs to 160 residues: Major strawberry allergen Fra a 1.04 (160 aa).

The protein belongs to the BetVI family. In terms of processing, phosphorylated in vivo. Phosphorylation prevents its activity as ribonuclease. Highly expressed in roots. Expressed a low levels in ripe red fruits.

In terms of biological role, possesses ribonuclease activity in vitro. The sequence is that of Major strawberry allergen Fra a 1.04 from Fragaria ananassa (Strawberry).